The sequence spans 307 residues: NADH-ubiquinone oxidoreductase chain 2 (307 aa).

10 helical membrane-spanning segments follow: residues 1–21 (MTLQ…LSMT), 25–45 (WIII…YYML), 58–78 (YFLI…YIFV), 88–108 (FIFI…FWII), 119–139 (IGIV…HMGC), 144–164 (MLNL…LIGM), 193–213 (LFKY…FLYL), 217–237 (MSIS…LFIG), 250–270 (LWFI…VYYL), and 287–307 (HYKM…LFLT).

It belongs to the complex I subunit 2 family.

Its subcellular location is the mitochondrion inner membrane. It carries out the reaction a ubiquinone + NADH + 5 H(+)(in) = a ubiquinol + NAD(+) + 4 H(+)(out). In terms of biological role, core subunit of the mitochondrial membrane respiratory chain NADH dehydrogenase (Complex I) that is believed to belong to the minimal assembly required for catalysis. Complex I functions in the transfer of electrons from NADH to the respiratory chain. The immediate electron acceptor for the enzyme is believed to be ubiquinone. This Albinaria caerulea (Land snail) protein is NADH-ubiquinone oxidoreductase chain 2 (ND2).